The chain runs to 865 residues: MKTAQIRQKFLDYFESKGHIIESSASLIPHNDKTLLFVNAGMVPFKDVFSGIEKRPYTRAVSVQRCARAGGKHNDLENVGYTARHHTFFEMLGNFSFGDYFKREAIHYAWEFLTKELNLPKKNLWVSVFDQDNEAEDIWVNEIGFPKNRISRCGAKDNFWQMGDTGPCGPSSEIFYDHGEHIAGGPPGHANEDGDRYIEIWNLVFTEFDKQEDGYLKPLAVPCVDTGMGLERLVAVLQHKNNNYDTDGFQNLVKAVVNLTPKFNNIKDNNASVRVITDHIRSAAFMIVDGVIPSNEGRGYVLRRIIRRGIRHGHKMGIGKVFFYRLASILALEFKDVYPELEQALSKVEKVLKREEQRFSKTLDQGMSILEEVITNFKGSEINGKIVFKLYDTYGFPVDLTSDIARERNLTIDMSGFEVEMTKQRDRARQASDFKISEKGVDIAERTEFLGYKQLKNVSLIQAIINNNELVEKIEVGDHGIVVLAQSSFYAESGGQIGDKGILSNMQVEFRVDHTNKQKSGAFEHHGVLNKGVLKVSDAVQANVDKKSRKCIARNHSATHLLHAALHIVLGKAVMQKGSLVGSEKLRFDFSYDKVIVKSDLERIESIVNRKILGNTKVYTDITNIEGAKKKGAMTLFGKKYGDTVRVLTMGKNEFSVELCGGTHVNQLGDIGLFRIISESSVSAGVRRIEALTGYDAYQFDNRIQNSLNKIAQMTRSSNTEVVGKVTQLIKQQKELEKQIATFQKKIANNQGDDLIVQAQEVKGIKLLSTVVEGVTSKDLRNIVDKLKDKLSSAVIVLAVVINDKVSLVTGVTKDLTKQYQARKILNHVAKQIGGKGDGRSDMAQGGGTKPECLIKALASVKSLI.

H556, H560, C660, and H664 together coordinate Zn(2+).

Belongs to the class-II aminoacyl-tRNA synthetase family. It depends on Zn(2+) as a cofactor.

The protein localises to the cytoplasm. It catalyses the reaction tRNA(Ala) + L-alanine + ATP = L-alanyl-tRNA(Ala) + AMP + diphosphate. In terms of biological role, catalyzes the attachment of alanine to tRNA(Ala) in a two-step reaction: alanine is first activated by ATP to form Ala-AMP and then transferred to the acceptor end of tRNA(Ala). Also edits incorrectly charged Ser-tRNA(Ala) and Gly-tRNA(Ala) via its editing domain. The sequence is that of Alanine--tRNA ligase from Vesicomyosocius okutanii subsp. Calyptogena okutanii (strain HA).